The chain runs to 156 residues: 3-hydroxyacyl-[acyl-carrier-protein] dehydratase FabZ (156 aa).

Residue histidine 50 is part of the active site.

The protein belongs to the thioester dehydratase family. FabZ subfamily.

The protein resides in the cytoplasm. The enzyme catalyses a (3R)-hydroxyacyl-[ACP] = a (2E)-enoyl-[ACP] + H2O. Functionally, involved in unsaturated fatty acids biosynthesis. Catalyzes the dehydration of short chain beta-hydroxyacyl-ACPs and long chain saturated and unsaturated beta-hydroxyacyl-ACPs. The polypeptide is 3-hydroxyacyl-[acyl-carrier-protein] dehydratase FabZ (Janthinobacterium sp. (strain Marseille) (Minibacterium massiliensis)).